Consider the following 253-residue polypeptide: MASSQSDSPPLFDLPVRPDFTIEWKIMREGLAPVAGLDEAGRGPLAGPVVAAAVVLDPDRIPEGLDDSKRLTAEARERLVQEIFEVAAAVSVASLCAASIDESNILKASLEAMRRALDGLCVRPAYALADGRDIPPGLPCPCRAVVKGDQRSQSIAAASMVAKVVRDRMMVRTGTLMPHYGFHSHVGYATERHREAITAYGPVTRLHRMSFSPFKTSGEEDRILASGDAAELIASAFSAADGLNGRDAEKEPV.

The region spanning 32 to 223 (APVAGLDEAG…FKTSGEEDRI (192 aa)) is the RNase H type-2 domain. A divalent metal cation contacts are provided by D38, E39, and D130.

This sequence belongs to the RNase HII family. Mn(2+) serves as cofactor. The cofactor is Mg(2+).

Its subcellular location is the cytoplasm. The catalysed reaction is Endonucleolytic cleavage to 5'-phosphomonoester.. Functionally, endonuclease that specifically degrades the RNA of RNA-DNA hybrids. This is Ribonuclease HII from Chelativorans sp. (strain BNC1).